The primary structure comprises 101 residues: Small ribosomal subunit protein eS24 (101 aa).

Belongs to the eukaryotic ribosomal protein eS24 family.

This Methanosarcina mazei (strain ATCC BAA-159 / DSM 3647 / Goe1 / Go1 / JCM 11833 / OCM 88) (Methanosarcina frisia) protein is Small ribosomal subunit protein eS24.